The sequence spans 358 residues: Peptide chain release factor 1 (358 aa).

Glutamine 235 carries the post-translational modification N5-methylglutamine.

It belongs to the prokaryotic/mitochondrial release factor family. In terms of processing, methylated by PrmC. Methylation increases the termination efficiency of RF1.

The protein resides in the cytoplasm. Peptide chain release factor 1 directs the termination of translation in response to the peptide chain termination codons UAG and UAA. This is Peptide chain release factor 1 from Nitrosospira multiformis (strain ATCC 25196 / NCIMB 11849 / C 71).